The chain runs to 670 residues: Methionine--tRNA ligase (670 aa).

The 'HIGH' region motif lies at 14-24; the sequence is PYANGHLHLGH. Zn(2+)-binding residues include C145, C148, C158, and C161. Residues 330 to 334 carry the 'KMSKS' region motif; sequence KMSKS. ATP is bound at residue K333. A tRNA-binding domain is found at 570 to 670; that stretch reads DFAKVDLRIA…AGAFPGMKVK (101 aa).

It belongs to the class-I aminoacyl-tRNA synthetase family. MetG type 1 subfamily. As to quaternary structure, homodimer. It depends on Zn(2+) as a cofactor.

It is found in the cytoplasm. The catalysed reaction is tRNA(Met) + L-methionine + ATP = L-methionyl-tRNA(Met) + AMP + diphosphate. Its function is as follows. Is required not only for elongation of protein synthesis but also for the initiation of all mRNA translation through initiator tRNA(fMet) aminoacylation. The sequence is that of Methionine--tRNA ligase from Legionella pneumophila (strain Corby).